The primary structure comprises 883 residues: Phosphoenolpyruvate carboxylase (883 aa).

Catalysis depends on residues H138 and K546.

It belongs to the PEPCase type 1 family. Mg(2+) serves as cofactor.

The catalysed reaction is oxaloacetate + phosphate = phosphoenolpyruvate + hydrogencarbonate. In terms of biological role, forms oxaloacetate, a four-carbon dicarboxylic acid source for the tricarboxylic acid cycle. This Shigella flexneri protein is Phosphoenolpyruvate carboxylase.